Here is a 210-residue protein sequence, read N- to C-terminus: Superoxide dismutase [Mn], mitochondrial (210 aa).

Mn(2+)-binding residues include His-29, His-77, Asp-164, and His-168.

It belongs to the iron/manganese superoxide dismutase family. In terms of assembly, homotetramer. Requires Mn(2+) as cofactor.

The protein localises to the mitochondrion matrix. The enzyme catalyses 2 superoxide + 2 H(+) = H2O2 + O2. Functionally, destroys superoxide anion radicals which are normally produced within the cells and which are toxic to biological systems. In Aspergillus niger, this protein is Superoxide dismutase [Mn], mitochondrial (sodB).